A 219-amino-acid polypeptide reads, in one-letter code: Octanoyltransferase (219 aa).

One can recognise a BPL/LPL catalytic domain in the interval E31–L219. Substrate contacts are provided by residues R69–H76, S153–G155, and G166–A168. Catalysis depends on C184, which acts as the Acyl-thioester intermediate.

It belongs to the LipB family.

The protein localises to the cytoplasm. The enzyme catalyses octanoyl-[ACP] + L-lysyl-[protein] = N(6)-octanoyl-L-lysyl-[protein] + holo-[ACP] + H(+). The protein operates within protein modification; protein lipoylation via endogenous pathway; protein N(6)-(lipoyl)lysine from octanoyl-[acyl-carrier-protein]: step 1/2. Functionally, catalyzes the transfer of endogenously produced octanoic acid from octanoyl-acyl-carrier-protein onto the lipoyl domains of lipoate-dependent enzymes. Lipoyl-ACP can also act as a substrate although octanoyl-ACP is likely to be the physiological substrate. The protein is Octanoyltransferase of Bdellovibrio bacteriovorus (strain ATCC 15356 / DSM 50701 / NCIMB 9529 / HD100).